The chain runs to 327 residues: Cyclin-A3-3 (327 aa).

Belongs to the cyclin family. Cyclin AB subfamily.

The sequence is that of Cyclin-A3-3 (CYCA3-3) from Arabidopsis thaliana (Mouse-ear cress).